A 147-amino-acid polypeptide reads, in one-letter code: UPF0306 protein YhbP (147 aa).

This sequence belongs to the UPF0306 family.

This chain is UPF0306 protein YhbP, found in Escherichia coli O7:K1 (strain IAI39 / ExPEC).